The following is a 298-amino-acid chain: Phospholipase A1 (298 aa).

A disulfide bridge links Cys-4 with Cys-87. N-linked (GlcNAc...) asparagine glycosylation is found at Asn-88 and Asn-122. Ser-134 acts as the Nucleophile in catalysis. Asp-162 serves as the catalytic Charge relay system. 2 cysteine pairs are disulfide-bonded: Cys-173-Cys-178 and Cys-216-Cys-225. His-227 serves as the catalytic Charge relay system. Disulfide bonds link Cys-242/Cys-266, Cys-243/Cys-291, and Cys-259/Cys-264.

Belongs to the AB hydrolase superfamily. Lipase family. As to expression, expressed by the venom gland.

It is found in the secreted. The catalysed reaction is a 1,2-diacyl-sn-glycero-3-phosphocholine + H2O = a 2-acyl-sn-glycero-3-phosphocholine + a fatty acid + H(+). In terms of biological role, catalyzes the hydrolysis of phosphatidylcholine with phospholipase A1 activity. May act as an allergen and induce hemolytic activity. The sequence is that of Phospholipase A1 from Vespula squamosa (Southern yellow jacket).